The following is a 52-amino-acid chain: Small, acid-soluble spore protein K (52 aa).

The disordered stretch occupies residues 1–52; the sequence is MGKQAEFWSESKNNSKIDGQPKAKSRFASKRPNGTINTHPQERMRAANQQEE.

This sequence belongs to the SspK family.

Its subcellular location is the spore core. This Bacillus anthracis (strain A0248) protein is Small, acid-soluble spore protein K.